A 226-amino-acid polypeptide reads, in one-letter code: UPF0502 protein azo0627 (226 aa).

Belongs to the UPF0502 family.

The sequence is that of UPF0502 protein azo0627 from Azoarcus sp. (strain BH72).